The sequence spans 428 residues: 3-phosphoshikimate 1-carboxyvinyltransferase (428 aa).

3-phosphoshikimate is bound by residues lysine 20, serine 21, and arginine 25. Lysine 20 is a binding site for phosphoenolpyruvate. Glycine 92 and arginine 120 together coordinate phosphoenolpyruvate. The 3-phosphoshikimate site is built by serine 166, glutamine 168, aspartate 314, and lysine 341. Glutamine 168 lines the phosphoenolpyruvate pocket. The active-site Proton acceptor is aspartate 314. Residues arginine 345 and arginine 387 each contribute to the phosphoenolpyruvate site.

It belongs to the EPSP synthase family. In terms of assembly, monomer.

The protein localises to the cytoplasm. The catalysed reaction is 3-phosphoshikimate + phosphoenolpyruvate = 5-O-(1-carboxyvinyl)-3-phosphoshikimate + phosphate. The protein operates within metabolic intermediate biosynthesis; chorismate biosynthesis; chorismate from D-erythrose 4-phosphate and phosphoenolpyruvate: step 6/7. Catalyzes the transfer of the enolpyruvyl moiety of phosphoenolpyruvate (PEP) to the 5-hydroxyl of shikimate-3-phosphate (S3P) to produce enolpyruvyl shikimate-3-phosphate and inorganic phosphate. The protein is 3-phosphoshikimate 1-carboxyvinyltransferase of Listeria innocua serovar 6a (strain ATCC BAA-680 / CLIP 11262).